Consider the following 328-residue polypeptide: Ribosomal protein L11 methyltransferase (328 aa).

Residues threonine 153, glycine 174, aspartate 196, and asparagine 263 each coordinate S-adenosyl-L-methionine.

Belongs to the methyltransferase superfamily. PrmA family.

The protein localises to the cytoplasm. It catalyses the reaction L-lysyl-[protein] + 3 S-adenosyl-L-methionine = N(6),N(6),N(6)-trimethyl-L-lysyl-[protein] + 3 S-adenosyl-L-homocysteine + 3 H(+). Its function is as follows. Methylates ribosomal protein L11. This chain is Ribosomal protein L11 methyltransferase, found in Chloroflexus aurantiacus (strain ATCC 29366 / DSM 635 / J-10-fl).